The following is a 433-amino-acid chain: Keratin, type I cytoskeletal 17 (433 aa).

The disordered stretch occupies residues 1–24 (MTTTIRQFTSSSSIKGSSGLGGGS). The tract at residues 1–83 (MTTTIRQFTS…GGVDGLLAGG (83 aa)) is head. Phosphoserine is present on residues serine 12 and serine 13. A Glycyl lysine isopeptide (Lys-Gly) (interchain with G-Cter in SUMO1); alternate cross-link involves residue lysine 15. Lysine 15 is covalently cross-linked (Glycyl lysine isopeptide (Lys-Gly) (interchain with G-Cter in SUMO2); alternate). Phosphoserine is present on residues serine 25, serine 32, serine 34, and serine 39. The residue at position 44 (serine 44) is a Phosphoserine; by RPS6KA1. Positions 84–120 (EKATMQNLNDRLASYLDKVRALEEANTELEVKIRDWY) are coil 1A. The IF rod domain occupies 84–395 (EKATMQNLND…RLLEGEDAHL (312 aa)). Threonine 110 carries the phosphothreonine modification. The tract at residues 121 to 138 (QKQAPGPARDYSAYYHTI) is linker 1. Residues 139 to 230 (EDLKNKILVA…NHEEEMNALR (92 aa)) are coil 1B. Residues 231–250 (GQVGGEINVEMDAAPGVDLS) are linker 12. The segment at 251-392 (RILSEMRDQY…TYRRLLEGED (142 aa)) is coil 2. Residue lysine 278 forms a Glycyl lysine isopeptide (Lys-Gly) (interchain with G-Cter in SUMO2) linkage. Threonine 279 bears the Phosphothreonine mark. Position 323 is a phosphoserine (serine 323). The interval 393–433 (AHLTQYKPKEPVTTRQVRTIVEEVQDGKVISSREQVHQTTR) is tail. Residues lysine 399, lysine 401, and lysine 420 each participate in a glycyl lysine isopeptide (Lys-Gly) (interchain with G-Cter in SUMO1); alternate cross-link. Residues lysine 399, lysine 401, and lysine 420 each participate in a glycyl lysine isopeptide (Lys-Gly) (interchain with G-Cter in SUMO2); alternate cross-link.

It belongs to the intermediate filament family. In terms of assembly, heterodimer of a type I and a type II keratin. KRT17 associates with KRT6 isomers (KRT6A or KRT6B). Interacts with TRADD and SFN. Post-translationally, phosphorylation at Ser-44 occurs in a growth- and stress-dependent fashion in skin keratinocytes, it has no effect on filament organization. Expressed strongly in outer root sheath and medulla region of hair follicle and in the early differentiating epithelial cells (trichocytes) within the hair bulb region. Weak expression in the matrix cells of hair bulb. Also present in the sweat gland within the skin, vibrissae follicle, salivary gland, tooth and thymus.

The protein resides in the cytoplasm. Its function is as follows. Type I keratin involved in the formation and maintenance of various skin appendages, specifically in determining shape and orientation of hair. Required for the correct growth of hair follicles, in particular for the persistence of the anagen (growth) state. Modulates the function of TNF-alpha in the specific context of hair cycling. Regulates protein synthesis and epithelial cell growth through binding to the adapter protein SFN and by stimulating Akt/mTOR pathway. Involved in tissue repair. May be a marker of basal cell differentiation in complex epithelia and therefore indicative of a certain type of epithelial 'stem cells'. Acts as a promoter of epithelial proliferation by acting a regulator of immune response in skin: promotes Th1/Th17-dominated immune environment contributing to the development of basaloid skin tumors. May act as an autoantigen in the immunopathogenesis of psoriasis, with certain peptide regions being a major target for autoreactive T-cells and hence causing their proliferation. The polypeptide is Keratin, type I cytoskeletal 17 (Krt17) (Mus musculus (Mouse)).